Here is a 535-residue protein sequence, read N- to C-terminus: Phosphoenolpyruvate carboxykinase (ATP) (535 aa).

The substrate site is built by Arg-59, Tyr-201, and Lys-207. ATP-binding positions include Lys-207, His-226, and 243 to 251 (GLSGTGKTT). Positions 207 and 226 each coordinate Mn(2+). Asp-264 is a binding site for Mn(2+). ATP-binding positions include Glu-292, Arg-328, 444-445 (RI), and Thr-450. Position 328 (Arg-328) interacts with substrate.

It belongs to the phosphoenolpyruvate carboxykinase (ATP) family. Requires Mn(2+) as cofactor.

It localises to the cytoplasm. The catalysed reaction is oxaloacetate + ATP = phosphoenolpyruvate + ADP + CO2. It functions in the pathway carbohydrate biosynthesis; gluconeogenesis. Its function is as follows. Involved in the gluconeogenesis. Catalyzes the conversion of oxaloacetate (OAA) to phosphoenolpyruvate (PEP) through direct phosphoryl transfer between the nucleoside triphosphate and OAA. This Bacteroides fragilis (strain ATCC 25285 / DSM 2151 / CCUG 4856 / JCM 11019 / LMG 10263 / NCTC 9343 / Onslow / VPI 2553 / EN-2) protein is Phosphoenolpyruvate carboxykinase (ATP).